We begin with the raw amino-acid sequence, 453 residues long: Methylenetetrahydrofolate--tRNA-(uracil-5-)-methyltransferase TrmFO (453 aa).

10–15 is an FAD binding site; the sequence is GGGLAG. The disordered stretch occupies residues 433 to 453; the sequence is ELAPWIDSAPPTAVPAAPAAG. Residues 441 to 453 are compositionally biased toward low complexity; it reads APPTAVPAAPAAG.

This sequence belongs to the MnmG family. TrmFO subfamily. FAD serves as cofactor.

The protein localises to the cytoplasm. The catalysed reaction is uridine(54) in tRNA + (6R)-5,10-methylene-5,6,7,8-tetrahydrofolate + NADH + H(+) = 5-methyluridine(54) in tRNA + (6S)-5,6,7,8-tetrahydrofolate + NAD(+). It catalyses the reaction uridine(54) in tRNA + (6R)-5,10-methylene-5,6,7,8-tetrahydrofolate + NADPH + H(+) = 5-methyluridine(54) in tRNA + (6S)-5,6,7,8-tetrahydrofolate + NADP(+). In terms of biological role, catalyzes the folate-dependent formation of 5-methyl-uridine at position 54 (M-5-U54) in all tRNAs. The protein is Methylenetetrahydrofolate--tRNA-(uracil-5-)-methyltransferase TrmFO of Anaeromyxobacter dehalogenans (strain 2CP-1 / ATCC BAA-258).